The following is a 602-amino-acid chain: ATP-dependent DNA helicase XPD (602 aa).

In terms of domain architecture, Helicase ATP-binding spans 1–247 (MQKSYGVALE…DLIEMIRSAL (247 aa)). Residue 11-18 (SPTGSGKT) participates in ATP binding. Residues C74, C95, C110, and C146 each contribute to the [4Fe-4S] cluster site. Positions 193–196 (DEAH) match the DEAH box motif. The Helicase C-terminal domain maps to 421 to 602 (VIEDIILKVK…SAQAREKYGA (182 aa)). 2 residues coordinate ssDNA: W531 and R566.

It belongs to the helicase family. RAD3/XPD subfamily. As to quaternary structure, monomer. [4Fe-4S] cluster is required as a cofactor.

The catalysed reaction is Couples ATP hydrolysis with the unwinding of duplex DNA at the replication fork by translocating in the 5'-3' direction. This creates two antiparallel DNA single strands (ssDNA). The leading ssDNA polymer is the template for DNA polymerase III holoenzyme which synthesizes a continuous strand.. It catalyses the reaction ATP + H2O = ADP + phosphate + H(+). ATP-dependent 5'-3' DNA helicase. Thought to be involved in nucleotide excision repair (NER) of DNA. The protein is ATP-dependent DNA helicase XPD of Thermoplasma acidophilum (strain ATCC 25905 / DSM 1728 / JCM 9062 / NBRC 15155 / AMRC-C165).